A 495-amino-acid chain; its full sequence is Protein adenylyltransferase Fic (495 aa).

The segment at 1–27 (MGTEAEQPSPPSPPAQQQEQTNPPLWN) is disordered. A helical membrane pass occupies residues 36–55 (LYRLVLFFIAGSLAAWTIHA). TPR repeat units lie at residues 121 to 154 (ALVS…APRH) and 155 to 189 (PEVL…SPSN). The Inhibitory (S/T)XXXE(G/N) motif signature appears at 246–251 (SVGIEG). ATP-binding positions include Glu250 and 331-334 (VGGH). Residues 300 to 435 (ITIKDILELH…IRPFVRFIAD (136 aa)) form the Fido domain. His378 is a catalytic residue. Residues 382-389 (DGNGRTSR), 414-415 (YY), and Asn422 each bind ATP.

Belongs to the fic family. As to quaternary structure, homodimer.

It localises to the membrane. It carries out the reaction L-tyrosyl-[protein] + ATP = O-(5'-adenylyl)-L-tyrosyl-[protein] + diphosphate. It catalyses the reaction L-threonyl-[protein] + ATP = 3-O-(5'-adenylyl)-L-threonyl-[protein] + diphosphate. The catalysed reaction is 3-O-(5'-adenylyl)-L-threonyl-[protein] + H2O = L-threonyl-[protein] + AMP + H(+). The side chain of Glu-250 determines which of the two opposing activities (AMPylase or de-AMPylase) will take place. In response to endoplasmic reticulum stress, mediates de-AMPylase activity. Adenylyltransferase activity is inhibited by the inhibitory helix present at the N-terminus: Glu-250 binds ATP and competes with ATP-binding at Arg-389, thereby preventing adenylyltransferase activity. In unstressed cells, disengagement of Glu-250 promotes adenylyltransferase activity. Activation dissociates ATP-binding from Glu-250, allowing ordered binding of the entire ATP moiety with the alpha-phosphate in an orientation that is productive for accepting an incoming target hydroxyl side chain. Its function is as follows. Protein that can both mediate the addition of adenosine 5'-monophosphate (AMP) to specific residues of target proteins (AMPylation), and the removal of the same modification from target proteins (de-AMPylation), depending on the context. The side chain of Glu-250 determines which of the two opposing activities (AMPylase or de-AMPylase) will take place. Acts as a key regulator of the unfolded protein response (UPR) by mediating AMPylation or de-AMPylation of Hsc70-3/BiP. In unstressed cells, acts as an adenylyltransferase by mediating AMPylation of Hsc70-3/BiP at 'Thr-518', thereby inactivating it. In response to endoplasmic reticulum stress, acts as a phosphodiesterase by mediating removal of ATP (de-AMPylation) from Hsc70-3/BiP at 'Thr-518', leading to restore HSPA5/BiP activity. The chain is Protein adenylyltransferase Fic from Drosophila yakuba (Fruit fly).